The primary structure comprises 405 residues: L-rhamnonate dehydratase (405 aa).

2 residues coordinate substrate: histidine 33 and arginine 59. Aspartate 226, glutamate 252, and glutamate 280 together coordinate Mg(2+). Catalysis depends on histidine 329, which acts as the Proton acceptor. Glutamate 349 is a binding site for substrate.

It belongs to the mandelate racemase/muconate lactonizing enzyme family. RhamD subfamily. In terms of assembly, homooctamer; tetramer of dimers. Mg(2+) serves as cofactor.

It catalyses the reaction L-rhamnonate = 2-dehydro-3-deoxy-L-rhamnonate + H2O. Catalyzes the dehydration of L-rhamnonate to 2-keto-3-deoxy-L-rhamnonate (KDR). In Escherichia coli O45:K1 (strain S88 / ExPEC), this protein is L-rhamnonate dehydratase.